The chain runs to 358 residues: Phosphoribosylformylglycinamidine cyclo-ligase (358 aa).

The protein belongs to the AIR synthase family.

The protein resides in the cytoplasm. The catalysed reaction is 2-formamido-N(1)-(5-O-phospho-beta-D-ribosyl)acetamidine + ATP = 5-amino-1-(5-phospho-beta-D-ribosyl)imidazole + ADP + phosphate + H(+). Its pathway is purine metabolism; IMP biosynthesis via de novo pathway; 5-amino-1-(5-phospho-D-ribosyl)imidazole from N(2)-formyl-N(1)-(5-phospho-D-ribosyl)glycinamide: step 2/2. The chain is Phosphoribosylformylglycinamidine cyclo-ligase from Chromohalobacter salexigens (strain ATCC BAA-138 / DSM 3043 / CIP 106854 / NCIMB 13768 / 1H11).